The primary structure comprises 905 residues: DNA mismatch repair protein MutS (905 aa).

Positions 1 to 95 (MELSLQGSLF…PAWGHHSQLK (95 aa)) are disordered. A compositionally biased stretch (basic and acidic residues) spans 38-50 (NLSDADLSKDALA). 721-728 (GPNASGKS) lines the ATP pocket.

It belongs to the DNA mismatch repair MutS family.

Functionally, this protein is involved in the repair of mismatches in DNA. It is possible that it carries out the mismatch recognition step. This protein has a weak ATPase activity. In Synechococcus sp. (strain CC9902), this protein is DNA mismatch repair protein MutS.